We begin with the raw amino-acid sequence, 177 residues long: Large ribosomal subunit protein uL6 (177 aa).

This sequence belongs to the universal ribosomal protein uL6 family. In terms of assembly, part of the 50S ribosomal subunit.

In terms of biological role, this protein binds to the 23S rRNA, and is important in its secondary structure. It is located near the subunit interface in the base of the L7/L12 stalk, and near the tRNA binding site of the peptidyltransferase center. This is Large ribosomal subunit protein uL6 from Pseudomonas fluorescens (strain Pf0-1).